A 196-amino-acid polypeptide reads, in one-letter code: Dephospho-CoA kinase (196 aa).

A DPCK domain is found at Ala-6–Leu-196. An ATP-binding site is contributed by Gly-14–Thr-19.

This sequence belongs to the CoaE family.

Its subcellular location is the cytoplasm. It catalyses the reaction 3'-dephospho-CoA + ATP = ADP + CoA + H(+). The protein operates within cofactor biosynthesis; coenzyme A biosynthesis; CoA from (R)-pantothenate: step 5/5. Its function is as follows. Catalyzes the phosphorylation of the 3'-hydroxyl group of dephosphocoenzyme A to form coenzyme A. This is Dephospho-CoA kinase from Helicobacter pylori (strain ATCC 700392 / 26695) (Campylobacter pylori).